Here is a 129-residue protein sequence, read N- to C-terminus: Putative reactive intermediate deaminase TdcF (129 aa).

Lysine 58 carries the post-translational modification N6-(pyridoxal phosphate)lysine. Substrate is bound by residues 105–107 (RSC) and glutamate 120.

It belongs to the RutC family. Homotrimer.

It participates in amino-acid degradation; L-threonine degradation via propanoate pathway. In terms of biological role, may be a post-translational regulator that controls the metabolic fate of L-threonine or the potentially toxic intermediate 2-ketobutyrate. The polypeptide is Putative reactive intermediate deaminase TdcF (tdcF) (Escherichia coli O6:H1 (strain CFT073 / ATCC 700928 / UPEC)).